Here is a 526-residue protein sequence, read N- to C-terminus: Protein spinster homolog 1 (526 aa).

The segment at 1–43 (MTSRSSQGDAAPFLTQADNTEEEGAPDPGGHSSDEEEEEGKDH) is disordered. Transmembrane regions (helical) follow at residues 48-68 (HLLT…LFYI), 98-118 (GLVQ…FGYL), 126-146 (LIMC…SFVS), 159-179 (LVGV…ADLF), 187-207 (MLSF…IAGS), 218-238 (WALR…IFVA), 272-292 (FILS…LALW), 321-341 (MIFG…GVEI), 355-375 (LVCA…LAFA), 385-405 (FIFI…DILL), 419-439 (LQIV…IGVI), and 463-483 (MICA…ALFI).

The protein belongs to the major facilitator superfamily. Spinster (TC 2.A.1.49) family.

The protein resides in the lysosome membrane. The enzyme catalyses a 1-acyl-sn-glycero-3-phosphocholine(out) + H(+)(out) = a 1-acyl-sn-glycero-3-phosphocholine(in) + H(+)(in). It catalyses the reaction a 1-acyl-sn-glycero-3-phosphoethanolamine(out) + H(+)(out) = a 1-acyl-sn-glycero-3-phosphoethanolamine(in) + H(+)(in). It carries out the reaction a 1-O-(1Z-alkenyl)-sn-glycero-3-phosphocholine(out) + H(+)(out) = a 1-O-(1Z-alkenyl)-sn-glycero-3-phosphocholine(in) + H(+)(in). The catalysed reaction is a 1-O-(1Z-alkenyl)-sn-glycero-3-phosphoethanolamine(out) + H(+)(out) = a 1-O-(1Z-alkenyl)-sn-glycero-3-phosphoethanolamine(in) + H(+)(in). Mediates the rate-limiting, proton-dependent, lysosomal efflux of lysophospholipids. Selective for zwitterionic headgroups such as lysophosphatidylcholine (LPC) and lysophosphatidylethanolamine (LPE). Essential player in lysosomal homeostasis. This is Protein spinster homolog 1 (spns1) from Xenopus tropicalis (Western clawed frog).